We begin with the raw amino-acid sequence, 190 residues long: Bifunctional D-Ala-D-Ala dipeptidase and D-Ala-D-Ala carboxypeptidase VanXYC (190 aa).

Residue E66 participates in Mg(2+) binding. The a dipeptide site is built by Q67, A88, S93, H95, and D102. Residues H95 and D102 each contribute to the Cu(2+) site. Zn(2+)-binding residues include H95 and D102. Catalysis depends on E153, which acts as the catalytic acid/base residue. Residues W155 and H156 each contribute to the a dipeptide site. A Cu(2+)-binding site is contributed by H156. H156 is a Zn(2+) binding site.

It belongs to the peptidase M15D family. As to quaternary structure, homodimer.

The protein localises to the cytoplasm. The enzyme catalyses D-alanyl-D-alanine + H2O = 2 D-alanine. It carries out the reaction UDP-N-acetyl-alpha-D-muramoyl-L-alanyl-gamma-D-glutamyl-L-lysyl-D-alanyl-D-alanine + H2O = UDP-N-acetyl-alpha-D-muramoyl-L-alanyl-gamma-D-glutamyl-L-lysyl-D-alanine + D-alanine. Bifunctional enzyme, exhibiting dipeptidase and carboxypeptidase activities. Catalyzes hydrolysis of the D-alanyl-D-alanine dipeptide. Cleaves the C-terminal D-alanine residue of UDP-muramyl-pentapeptide[Ala] (UDP-MurNAc-L-Ala-D-Glu-L-Lys-D-Ala-D-Ala). Shows no activity against the pentapeptide with a C-terminal D-serine residue. Together with VanC/VanC1 and VanT, required for vancomycin resistance in E.gallinarum strain BM4174. The chain is Bifunctional D-Ala-D-Ala dipeptidase and D-Ala-D-Ala carboxypeptidase VanXYC from Enterococcus gallinarum.